Consider the following 536-residue polypeptide: MFS-type efflux pump MFS1 (536 aa).

Helical transmembrane passes span valine 30–alanine 50, tyrosine 80–valine 100, and tryptophan 102–proline 122. Asparagine 123 carries an N-linked (GlcNAc...) asparagine glycan. 3 helical membrane-spanning segments follow: residues valine 133 to isoleucine 153, glycine 163 to phenylalanine 183, and tryptophan 191 to leucine 211. Asparagine 221 is a glycosylation site (N-linked (GlcNAc...) asparagine). 8 helical membrane passes run isoleucine 234 to glycine 254, isoleucine 264 to arginine 284, phenylalanine 306 to phenylalanine 326, isoleucine 342 to isoleucine 362, alanine 366 to phenylalanine 386, isoleucine 400 to valine 420, valine 426 to serine 446, and threonine 503 to tryptophan 523.

The protein belongs to the major facilitator superfamily. TCR/Tet family.

It is found in the cell membrane. MFS-type efflux pump involved in the modulation susceptibility to azoles, including fluconazole, itraconazole, ketoconazole, miconazole and voriconazole. Confers also increased resistance chloramphenicol and thiamphenicol, suggesting that it acts as a pleiotropic drug transporter with a broad substrate spectrum. Finally, increases the tolerance to cycloheximide when expressed in S.cerevisiae, but not in dermatophyte species. This chain is MFS-type efflux pump MFS1, found in Trichophyton rubrum (strain ATCC MYA-4607 / CBS 118892) (Athlete's foot fungus).